The primary structure comprises 488 residues: Glutamyl-tRNA(Gln) amidotransferase subunit A (488 aa).

Residues K77 and S152 each act as charge relay system in the active site. S176 acts as the Acyl-ester intermediate in catalysis.

Belongs to the amidase family. GatA subfamily. Heterotrimer of A, B and C subunits.

The catalysed reaction is L-glutamyl-tRNA(Gln) + L-glutamine + ATP + H2O = L-glutaminyl-tRNA(Gln) + L-glutamate + ADP + phosphate + H(+). Allows the formation of correctly charged Gln-tRNA(Gln) through the transamidation of misacylated Glu-tRNA(Gln) in organisms which lack glutaminyl-tRNA synthetase. The reaction takes place in the presence of glutamine and ATP through an activated gamma-phospho-Glu-tRNA(Gln). This is Glutamyl-tRNA(Gln) amidotransferase subunit A from Streptococcus pneumoniae (strain 70585).